We begin with the raw amino-acid sequence, 1418 residues long: JmjC domain-containing histone demethylation protein 1 (1418 aa).

Disordered stretches follow at residues 1 to 86 (MIGA…SSST), 102 to 162 (APLS…STFD), and 308 to 329 (GADR…SDEN). Over residues 44–60 (WIDRGDSQAASYDRDRV) the composition is skewed to basic and acidic residues. The span at 61–71 (TSNNDVYSSTN) shows a compositional bias: polar residues. Residues 127–139 (STERPAKRPRSEK) are compositionally biased toward basic and acidic residues. Polar residues predominate over residues 143 to 162 (PLHQPQTTVAPDANPSSTFD). Basic and acidic residues predominate over residues 308–321 (GADRASLDVPPRGD). The PHD-type zinc finger occupies 331-391 (QANCAACNLV…KFICRRCRPI (61 aa)). In terms of domain architecture, JmjC spans 588–746 (VSQSKLGKLI…MQIKVAKIEK (159 aa)). T639 lines the substrate pocket. Fe cation contacts are provided by H642 and D644. K659 lines the substrate pocket. H714 serves as a coordination point for Fe cation. 4 disordered regions span residues 891–964 (PQWT…TVEI), 1090–1118 (NAAT…CDDC), 1130–1195 (YGRI…HTQR), and 1250–1394 (KPTA…DEPD). The segment covering 907-925 (LTEKKPAGRPSRRSERNAE) has biased composition (basic and acidic residues). Basic and acidic residues-rich tracts occupy residues 1130 to 1143 (YGRI…ERSK) and 1186 to 1195 (AEGDMSHTQR). Residues 1250–1263 (KPTASLVSPPTSQA) show a composition bias toward polar residues. The span at 1341-1352 (SSKKPASRPSSS) shows a compositional bias: low complexity.

The protein belongs to the JHDM1 histone demethylase family. The cofactor is Fe(2+).

The protein resides in the nucleus. It catalyses the reaction N(6),N(6)-dimethyl-L-lysyl(36)-[histone H3] + 2 2-oxoglutarate + 2 O2 = L-lysyl(36)-[histone H3] + 2 formaldehyde + 2 succinate + 2 CO2. In terms of biological role, histone demethylase that specifically demethylates 'Lys-36' of histone H3, thereby playing a central role in histone code. The protein is JmjC domain-containing histone demethylation protein 1 (jhd1) of Aspergillus fumigatus (strain ATCC MYA-4609 / CBS 101355 / FGSC A1100 / Af293) (Neosartorya fumigata).